A 796-amino-acid polypeptide reads, in one-letter code: DNA damage-responsive transcriptional repressor RPH1 (796 aa).

The JmjN domain maps to 14–55 (VPVFKPTYEQFEDFYAYCKAINKYGMKSGVVKVIPPKEWKDK). In terms of domain architecture, JmjC spans 193–355 (PEGLNVWNVA…IGKKAGKCHC (163 aa)). Thr-399 bears the Phosphothreonine mark. Phosphoserine is present on residues Ser-430, Ser-459, Ser-557, Ser-561, Ser-575, and Ser-584. The short motif at 455 to 471 (KRISSFQEQPLNKLLKR) is the Bipartite nuclear localization signal element. The disordered stretch occupies residues 599–692 (RQQHSQQHSF…DKEQGSSPLN (94 aa)). The span at 601 to 621 (QHSQQHSFSTPSTVSNLSTSV) shows a compositional bias: polar residues. The span at 629–640 (NDIKTPHPERPN) shows a compositional bias: basic and acidic residues. Ser-652 is modified (phosphoserine). A compositionally biased stretch (polar residues) spans 654–669 (VETSKSNLILSKVAST). Positions 670 to 686 (RQEDSFTSRNDDLDKEQ) are enriched in basic and acidic residues. A Phosphoserine modification is found at Ser-689. The C2H2-type 1 zinc finger occupies 709–732 (YICKECQRKFSSGHHLTRHKKSVH). Residues 738–763 (HSCPKCGKRFKRRDHVLQHLNKKIPC) form a C2H2-type 2; atypical zinc finger. The segment at 774 to 796 (IMNPTVQPQDGKAAINQQSTPLN) is disordered.

RAD53-dependent phosphorylated in response to DNA damage.

The protein resides in the nucleus. Its function is as follows. Transcriptional repressor of photolyase PHR1. Recognizes and binds the sequence AG(4) in the upstream repressing sequence of PHR1. Derepresses PHR1 transcription when phosphorylated. The chain is DNA damage-responsive transcriptional repressor RPH1 (RPH1) from Saccharomyces cerevisiae (strain ATCC 204508 / S288c) (Baker's yeast).